A 277-amino-acid chain; its full sequence is 3-methyl-2-oxobutanoate hydroxymethyltransferase (277 aa).

Residues Asp-58 and Asp-97 each coordinate Mg(2+). Residues 58 to 59 (DS), Asp-97, and Lys-127 contribute to the 3-methyl-2-oxobutanoate site. Residue Glu-129 coordinates Mg(2+). Residue Glu-195 is the Proton acceptor of the active site.

This sequence belongs to the PanB family. As to quaternary structure, homodecamer; pentamer of dimers. It depends on Mg(2+) as a cofactor.

It is found in the cytoplasm. It catalyses the reaction 3-methyl-2-oxobutanoate + (6R)-5,10-methylene-5,6,7,8-tetrahydrofolate + H2O = 2-dehydropantoate + (6S)-5,6,7,8-tetrahydrofolate. It functions in the pathway cofactor biosynthesis; (R)-pantothenate biosynthesis; (R)-pantoate from 3-methyl-2-oxobutanoate: step 1/2. Catalyzes the reversible reaction in which hydroxymethyl group from 5,10-methylenetetrahydrofolate is transferred onto alpha-ketoisovalerate to form ketopantoate. The chain is 3-methyl-2-oxobutanoate hydroxymethyltransferase from Leifsonia xyli subsp. xyli (strain CTCB07).